We begin with the raw amino-acid sequence, 220 residues long: Putative NAD(P)H nitroreductase SERP2086 (220 aa).

Belongs to the nitroreductase family. It depends on FMN as a cofactor.

This Staphylococcus epidermidis (strain ATCC 35984 / DSM 28319 / BCRC 17069 / CCUG 31568 / BM 3577 / RP62A) protein is Putative NAD(P)H nitroreductase SERP2086.